We begin with the raw amino-acid sequence, 115 residues long: U3-lycotoxin-Ls1d (115 aa).

A signal peptide spans 1 to 20 (MKFVLLFGVLLVTLFSYSSA). The propeptide occupies 21 to 44 (EMLDDFDQADEDELLSLIEKEEAR). Cystine bridges form between cysteine 48/cysteine 63, cysteine 55/cysteine 72, cysteine 62/cysteine 87, and cysteine 74/cysteine 85.

It belongs to the neurotoxin 19 (CSTX) family. 01 subfamily. As to expression, expressed by the venom gland.

The protein resides in the secreted. The protein is U3-lycotoxin-Ls1d of Lycosa singoriensis (Wolf spider).